The primary structure comprises 55 residues: NEYHGFVDKANNENKRKKQQGRDDFVVKPNNFANRRRKDDYNENYYDDVDAADVV.

Residues 1–26 are compositionally biased toward basic and acidic residues; sequence NEYHGFVDKANNENKRKKQQGRDDFV. Residues 1–39 are disordered; it reads NEYHGFVDKANNENKRKKQQGRDDFVVKPNNFANRRRKD.

Possesses antifungal activity against B.cinerea, M.arachidicola, F.oxysporum, R.solani and C.comatus. Its function is as follows. Suppresses the activity of HIV-1 reverse transcriptase and stimulates the proliferation of murine splenocytes. This chain is Cicadin, found in Cicada flammata.